A 1082-amino-acid chain; its full sequence is MSIALAFFILVLLGFSWASPSALDDTFNVSRSVGLISSSNLESCQSSPLEVGNIYNSTSASEILSTLDAKYITIIGVIGSSNSSIQDLIDSVGNSNNAASSNPTSTVTEYVDRVQTVTEYVTLSCGQAFTSTVDISSSTSSSVINSPTGTAVSSQISTLSMSPSSTPVFSPSASVSSKVASSVSYVSSEPSDSSSSTNTVILTTSVNSPAVSSSETLTSVSITSTESAYTSSSVDIAASTTASSTLPVSTSEATVSFSTDIPATPSTLSSPASSSSSYLVETSSTLTDSVFTTVTATSDSSVITYTLINSVTSSSETTNLPSSSSSLVTIGESSFPSSLLSLLTQSFSTVRSTSSSSTDQLTSASPISSSVISPSVSSPTSSILTNSGSIKSGDHQIVTTSFVQTTTHGSQVETLTYVTTLTETILTTTYDSHTFLTTITPSPSNSISYTNNTFIPSSSIKSSIVYSVTPTSAENYTSSEAFSTSSSLVVIPPVNSSLVTSSTSFTKFSSLSSSQLSTENFTSASSSLSLTNAKSSLSTPSTTIPTSNSSVSLQTSSSLIISSPIISSSLTATSTSTPALTHSITPSNTSYTSSLIPSSSTDYSSSLITVCSNVTSEISSTSLASLISTLTSQQISSNKSSEFVGQTTTEYTTSGSVGFTTTLATQSGSVPGTVLVDVPTPSWITETVTSGSVGFTTTIATPIGTTAGTVLVDIPTPSWVTETVTSGSIGFTTTIATPIGSTAGTVLVDVPTPSWVTETVTSGSVGFTTTIATPIGSTAGTVLVDIPTPSWVTETVTSGSVGFTTTIATPVGTTAGTVLVDIPTPSWVTETVTSGSVGFTTTIATPVGTTAGTVVVDVPTPSWVTETVTSGSVGFTTTIATPIGSTAGTVLVDIPTPSWVTETVTSGSVGFTTTIATPVGTTAGTVLVDIPTPSWVTETVTSGSVGFTTTIATPIGTTAGTVLVDIPTPSWVTETVTSGSVGFTTTIATPVGTTAGTVLVDIPTPSWVTETVTSGSVGFTTTIATPIGTTAGTVLVDIPQQHATTTTTTTFDGFSGYTSSYTGSITETIVIGTPHHSVVDVS.

Residues 1-18 form the signal peptide; sequence MSIALAFFILVLLGFSWA. Residues N28, N56, and N82 are each glycosylated (N-linked (GlcNAc...) asparagine). The tract at residues 353–374 is disordered; it reads TSSSSTDQLTSASPISSSVISP. 8 N-linked (GlcNAc...) asparagine glycosylation sites follow: N451, N475, N495, N520, N548, N588, N613, and N638. Tandem repeats lie at residues 646–681, 682–717, 718–753, 754–789, 790–825, 826–861, 862–897, 898–933, 934–969, 970–1005, and 1006–1041. The tract at residues 720 to 1043 is 11 X 36 AA approximate tandem repeats; it reads VTETVTSGSI…VLVDIPQQHA (324 aa).

The protein belongs to the mam3/map4 family.

It is found in the cell surface. M cell-type specific protein involved in agglutination during conjugation. This chain is M cell-type agglutination protein mam3, found in Schizosaccharomyces pombe (strain 972 / ATCC 24843) (Fission yeast).